The primary structure comprises 160 residues: Phosphopantetheine adenylyltransferase (160 aa).

Residue Ser-8 coordinates substrate. ATP-binding positions include Ser-8–Phe-9 and His-16. Substrate-binding residues include Lys-40, Leu-74, and Lys-88. ATP-binding positions include Gly-89–Arg-91, Glu-99, and Tyr-124–Thr-130.

It belongs to the bacterial CoaD family. Homohexamer. The cofactor is Mg(2+).

It localises to the cytoplasm. It carries out the reaction (R)-4'-phosphopantetheine + ATP + H(+) = 3'-dephospho-CoA + diphosphate. It functions in the pathway cofactor biosynthesis; coenzyme A biosynthesis; CoA from (R)-pantothenate: step 4/5. Functionally, reversibly transfers an adenylyl group from ATP to 4'-phosphopantetheine, yielding dephospho-CoA (dPCoA) and pyrophosphate. The protein is Phosphopantetheine adenylyltransferase of Thermus thermophilus (strain ATCC BAA-163 / DSM 7039 / HB27).